A 190-amino-acid polypeptide reads, in one-letter code: Pyridoxamine 5'-phosphate oxidase C1952.08c homolog (190 aa).

Positions 62 and 69 each coordinate FMN.

This sequence belongs to the pyridoxamine 5'-phosphate oxidase family. It depends on FMN as a cofactor.

It localises to the cytoplasm. The protein resides in the nucleus. The chain is Pyridoxamine 5'-phosphate oxidase C1952.08c homolog from Schizosaccharomyces pombe (strain 972 / ATCC 24843) (Fission yeast).